We begin with the raw amino-acid sequence, 894 residues long: MGEYRLAVDIGASSGRVMAGKISEAGIDLQEVYRFDNQAQLMGGHYCWDVDHLFGEIKKGIRVAVQSGLQPVSIGMNTWAVDFVLLDEKGERLTDAISYRDPRTNGVMEGVIETYGKKALYERTGIAFQPFNTLYQLLALKKQNPELLEQAHAFLMVPDYFHFLLTGVKVNEYTNATTTQLVNVHTKDWDRQLLKEFGLPCGMFQPLQHPGTKIGSLTESMEKELGVQLEVIVPATHDTASAIAALPEKQTSVYISSGTWSLIGIENRTPICSQQAMAANFTNEGGVGSRIRFLKNIMGLWMIQEVQRLLPGHWSFSQLAQAASESTYTGEIDVDQHRFLKPENMIEEIQQACREKGLAVPESPGDLAKCIYDSLIASYDKAVTEIEAISGKPYEQIHIIGGGALNKEINQRLANRTNKTVIAGPTEATAVGNLLVQAIADGELSRIEEGRALVRTAFPVTYFLPQRSESHVSSRFESAKVQYEQLGIDVEAAFAKVKQVPISVHCWQGDDLHGTEVIANELSGGIDVTGNHPGRARNGEELRRDLEKALSLIPGKHRVNLHAMYAETDSVPIERDQLKTEHFEKWVKWAKSLGIGLDFNPTVFSHPKAADGLTLAHPDEEIRTFWINHCKACRKIAAYFGEQLGTPSLVNIWVPDGYKDTPSDRLTPRKRLKESLDAIYADEYDPMLVLDTVESKLFGIGSEAYVVGSHEFYLNYANQNNKLYLLDTGHFHPTEVVSNKLSAMLLFHDQLALHVSRPVRWDSDHVVTFDDELREIAIELVRNDALGNIHIGLDFFDASINRVAAWAIGTRNMAKALLYAALMPHRHLKQLQDEGDFTSRLAMQEQLKTYPFGDMWDEYCKRQGVPTETEWLDVVKEYEQQVQLKRESEKAKQR.

Residues 1 to 465 (MGEYRLAVDI…TAFPVTYFLP (465 aa)) form a rhamnulokinase region. The tract at residues 466 to 894 (QRSESHVSSR…KRESEKAKQR (429 aa)) is L-rhamnose isomerase. Residues histidine 730, aspartate 762, and aspartate 764 each coordinate Mn(2+).

This sequence in the N-terminal section; belongs to the rhamnulokinase family. It in the C-terminal section; belongs to the rhamnose isomerase family. Requires Mn(2+) as cofactor.

Its subcellular location is the cytoplasm. The catalysed reaction is L-rhamnulose + ATP = L-rhamnulose 1-phosphate + ADP + H(+). It catalyses the reaction L-rhamnopyranose = L-rhamnulose. The protein operates within carbohydrate degradation; L-rhamnose degradation; glycerone phosphate from L-rhamnose: step 1/3. Its pathway is carbohydrate degradation; L-rhamnose degradation; glycerone phosphate from L-rhamnose: step 2/3. The chain is Bifunctional enzyme RhaA/RhaB (rhaAB) from Shouchella clausii (strain KSM-K16) (Alkalihalobacillus clausii).